The chain runs to 189 residues: dTTP/UTP pyrophosphatase (189 aa).

D70 functions as the Proton acceptor in the catalytic mechanism.

The protein belongs to the Maf family. YhdE subfamily. Requires a divalent metal cation as cofactor.

It localises to the cytoplasm. The catalysed reaction is dTTP + H2O = dTMP + diphosphate + H(+). The enzyme catalyses UTP + H2O = UMP + diphosphate + H(+). Functionally, nucleoside triphosphate pyrophosphatase that hydrolyzes dTTP and UTP. May have a dual role in cell division arrest and in preventing the incorporation of modified nucleotides into cellular nucleic acids. The sequence is that of dTTP/UTP pyrophosphatase from Akkermansia muciniphila (strain ATCC BAA-835 / DSM 22959 / JCM 33894 / BCRC 81048 / CCUG 64013 / CIP 107961 / Muc).